The following is a 46-amino-acid chain: Major urinary protein (46 aa).

N-linked (GlcNAc...) asparagine glycosylation is present at Asn15.

It belongs to the calycin superfamily. Lipocalin family. In terms of tissue distribution, found in many tissues including liver, urine, preputial gland, clitoral gland, submandibular gland and salivary gland.

It localises to the secreted. Binds pheromones that are released from drying urine of males. These pheromones affect the sexual behavior of females. Acts as a shuttle for pheromonal communication between individuals of the same species. This chain is Major urinary protein, found in Rattus rattus (Black rat).